We begin with the raw amino-acid sequence, 1141 residues long: DNA-directed RNA polymerase subunit beta (1141 aa).

The protein belongs to the RNA polymerase beta chain family. In terms of assembly, the RNAP catalytic core consists of 2 alpha, 1 beta, 1 beta' and 1 omega subunit. When a sigma factor is associated with the core the holoenzyme is formed, which can initiate transcription.

The enzyme catalyses RNA(n) + a ribonucleoside 5'-triphosphate = RNA(n+1) + diphosphate. In terms of biological role, DNA-dependent RNA polymerase catalyzes the transcription of DNA into RNA using the four ribonucleoside triphosphates as substrates. This Parafrankia sp. (strain EAN1pec) protein is DNA-directed RNA polymerase subunit beta.